The following is a 144-amino-acid chain: Snaclec 6 (144 aa).

The N-terminal stretch at 1-23 is a signal peptide; that stretch reads MGRFISVSFGLLVVFLSLSGTGA. 3 disulfide bridges follow: C25–C36, C53–C142, and C119–C134. The 112-residue stretch at 32–143 folds into the C-type lectin domain; it reads HEGHCYKVFK…CNFIAPVVCK (112 aa).

It belongs to the snaclec family. In terms of assembly, heterodimer; disulfide-linked.

It localises to the secreted. Functionally, interferes with one step of hemostasis (modulation of platelet aggregation, or coagulation cascade, for example). In Daboia siamensis (Eastern Russel's viper), this protein is Snaclec 6.